Here is a 146-residue protein sequence, read N- to C-terminus: UPF0178 protein R01393 (146 aa).

It belongs to the UPF0178 family.

The protein is UPF0178 protein R01393 of Rhizobium meliloti (strain 1021) (Ensifer meliloti).